Here is a 191-residue protein sequence, read N- to C-terminus: IMP cyclohydrolase (191 aa).

This sequence belongs to the archaeal IMP cyclohydrolase family.

The enzyme catalyses IMP + H2O = 5-formamido-1-(5-phospho-D-ribosyl)imidazole-4-carboxamide. It participates in purine metabolism; IMP biosynthesis via de novo pathway; IMP from 5-formamido-1-(5-phospho-D-ribosyl)imidazole-4-carboxamide: step 1/1. In terms of biological role, catalyzes the cyclization of 5-formylamidoimidazole-4-carboxamide ribonucleotide to IMP. This Natronomonas pharaonis (strain ATCC 35678 / DSM 2160 / CIP 103997 / JCM 8858 / NBRC 14720 / NCIMB 2260 / Gabara) (Halobacterium pharaonis) protein is IMP cyclohydrolase.